The chain runs to 525 residues: MPSNNLIKNALISVSDKKNIVEVAEKLIINKINLFSTGGTAQILKKNNIPVTEISDYTKFPEIMDGRVKTLHPKIMGGILGQKQKDQEIMKLYNICPIDIVIVNFYPFEKIKNIKKNDIDNVVNNIDIGGPTLVRASAKNYKNVIVIVDLDDFQSTIDSINNNTMNMEKRFNLASKAFEYTSYYEQIISQYFIEQNSLYKKTNNSLFPNEINFSFIKKQDLRYGENYHQKSSFYIEKNMCDSGTISTACQIQGKTLSYNNISDSDIALECVKQFTKPACVIVKHGNPCSVAVSHNILESYLSAYNSDPISAFGGIISFNCKLDEKTAQTIINQQFVEVIIIPEISKKAVKILQKKQNIRVLVTGKLQNNTVGLDLKKITNGLLVQEYDSHNIDYNSWSFVTKRSPTKKELKDSIFCWQVAKFVKSNAIVYGSDEITIGIGAGQMSRIYSTKLANIKVKDQGKNIIGATMASDAFFPFRDGIDEAASVGISSIIQPGGSIRDEEIIRAADEHNITMIFTKKRHFKH.

Residues 1–148 (MPSNNLIKNA…KNYKNVIVIV (148 aa)) form the MGS-like domain.

This sequence belongs to the PurH family.

It carries out the reaction (6R)-10-formyltetrahydrofolate + 5-amino-1-(5-phospho-beta-D-ribosyl)imidazole-4-carboxamide = 5-formamido-1-(5-phospho-D-ribosyl)imidazole-4-carboxamide + (6S)-5,6,7,8-tetrahydrofolate. It catalyses the reaction IMP + H2O = 5-formamido-1-(5-phospho-D-ribosyl)imidazole-4-carboxamide. The protein operates within purine metabolism; IMP biosynthesis via de novo pathway; 5-formamido-1-(5-phospho-D-ribosyl)imidazole-4-carboxamide from 5-amino-1-(5-phospho-D-ribosyl)imidazole-4-carboxamide (10-formyl THF route): step 1/1. It functions in the pathway purine metabolism; IMP biosynthesis via de novo pathway; IMP from 5-formamido-1-(5-phospho-D-ribosyl)imidazole-4-carboxamide: step 1/1. This Buchnera aphidicola subsp. Acyrthosiphon pisum (strain APS) (Acyrthosiphon pisum symbiotic bacterium) protein is Bifunctional purine biosynthesis protein PurH.